The primary structure comprises 304 residues: Small glutamine-rich tetratricopeptide repeat-containing protein beta (304 aa).

TPR repeat units lie at residues 15-49 (LREQSQMDAYTSDEQESLEVAIQCLETVFKISPED), 85-118 (ADQLKDEGNNHMKEENYAAAVDCYTQAIELDPNN), 120-152 (VYYCNRAAAQSKLSHYTDAIKDCEKAIAIDSKY), and 153-186 (SKAYGRMGLALTAMNKFEEAVTSYQKALDLDPEN). Position 131 is an N6-acetyllysine (Lys131). Residues Ser293, Ser295, and Ser297 each carry the phosphoserine modification.

Belongs to the SGT family. Homooligomerize.

In terms of biological role, co-chaperone that binds directly to HSC70 and HSP70 and regulates their ATPase activity. The sequence is that of Small glutamine-rich tetratricopeptide repeat-containing protein beta (Sgtb) from Mus musculus (Mouse).